Reading from the N-terminus, the 35-residue chain is MSDINTTRLPFVFVASPPCVGDDIAMVLTRGENLC.

Residues Met1–Pro10 constitute a propeptide that is removed on maturation. Positions Phe11–Pro18 form a cross-link, cyclopeptide (Phe-Pro). The propeptide occupies Cys19–Cys35.

It belongs to the MSDIN fungal toxin family. Post-translationally, processed by the macrocyclase-peptidase enzyme POPB to yield a toxic cyclic octapeptide. POPB first removes 10 residues from the N-terminus. Conformational trapping of the remaining peptide forces the enzyme to release this intermediate rather than proceed to macrocyclization. The enzyme rebinds the remaining peptide in a different conformation and catalyzes macrocyclization of the N-terminal 8 residues. As to expression, expressed in basidiocarps.

Probable toxin that belongs to the MSDIN-like toxin family responsible for a large number of food poisoning cases and deaths. The sequence is that of MSDIN-like toxin proprotein 6 from Amanita exitialis (Guangzhou destroying angel).